Reading from the N-terminus, the 210-residue chain is GRF1-interacting factor 1 (210 aa).

Over residues 135-152 (ATLQHQQLHHSQLGMSSS) the composition is skewed to low complexity. A disordered region spans residues 135–210 (ATLQHQQLHH…LYLKSSDDGN (76 aa)). Residues 182-198 (GSGGGGEGRGGSSGDGG) show a composition bias toward gly residues.

The protein belongs to the SS18 family. In terms of assembly, interacts with GRF1, GRF2, GRF5 and GRF9. As to expression, strongly expressed in actively growing and developing tissues, such as roots, upper stems, and shoot tips and flower buds. Also expressed in mature flowers. Not expressed in the shoot apical meristem (SAM). Highly accumulated in the proximal part of leaf primordia, in the key proliferative zone at the junction region between the leaf blade and leaf petiole.

In terms of biological role, transcription coactivator that plays a role in the regulation of cell expansion in leaf and cotyledons tissues. Component of a network formed by miR396, the GRFs and their interacting factors (GIFs) acting in the regulation of meristem function, at least partially through the control of cell proliferation. Appears to function synergistically with GRF1 as a transcriptional coactivator. Acts together with GRF5 for the development of appropriate leaf size and shape through the promotion and/or maintenance of cell proliferation activity in leaf primordia. Plays a role in adaxial/abaxial patterning and growth in leaf morphogenesis. GIFs are involved in the positive regulation of cell proliferation of lateral organs in a functionally redundant manner. Together with GATA18/HAN, mediates cotyledon identity by preventing ectopic root formation through the repression of PLT1 expression. In Arabidopsis thaliana (Mouse-ear cress), this protein is GRF1-interacting factor 1.